Reading from the N-terminus, the 361-residue chain is Histidinol-phosphate aminotransferase (361 aa).

Lys218 carries the post-translational modification N6-(pyridoxal phosphate)lysine.

It belongs to the class-II pyridoxal-phosphate-dependent aminotransferase family. Histidinol-phosphate aminotransferase subfamily. Homodimer. The cofactor is pyridoxal 5'-phosphate.

It carries out the reaction L-histidinol phosphate + 2-oxoglutarate = 3-(imidazol-4-yl)-2-oxopropyl phosphate + L-glutamate. Its pathway is amino-acid biosynthesis; L-histidine biosynthesis; L-histidine from 5-phospho-alpha-D-ribose 1-diphosphate: step 7/9. The sequence is that of Histidinol-phosphate aminotransferase from Ruegeria pomeroyi (strain ATCC 700808 / DSM 15171 / DSS-3) (Silicibacter pomeroyi).